The primary structure comprises 633 residues: Chaperone protein dnaK2 (633 aa).

At T197 the chain carries Phosphothreonine; by autocatalysis. Over residues 513–532 the composition is skewed to basic and acidic residues; sequence AEQNASSDKERREKIERKNQ. Disordered stretches follow at residues 513 to 534 and 598 to 633; these read AEQN…NQAD and QQAG…TETK. Over residues 606 to 619 the composition is skewed to low complexity; it reads PGAAPQDGGTTSSD. Acidic residues predominate over residues 620-633; it reads GGDDVIDADFTETK.

It belongs to the heat shock protein 70 family.

Acts as a chaperone. In Nostoc sp. (strain PCC 7120 / SAG 25.82 / UTEX 2576), this protein is Chaperone protein dnaK2 (dnaK2).